We begin with the raw amino-acid sequence, 299 residues long: Very long chain fatty acid elongase 5 (299 aa).

Met1 is subject to N-acetylmethionine. 7 helical membrane passes run 26–46, 64–84, 112–132, 139–158, 168–187, 205–225, and 227–247; these read WFLL…LLIV, ILQL…YELV, VLWW…FFIL, ITVL…WFVM, FGAT…YGLS, GQLV…FWPC, and FPLG…ALFT. The disordered stretch occupies residues 274 to 299; it reads VAAVNGHTNSFPSLENSVKPRKQRKD. Over residues 279 to 289 the composition is skewed to polar residues; the sequence is GHTNSFPSLEN.

Belongs to the ELO family. ELOVL5 subfamily. Interacts with TECR.

Its subcellular location is the endoplasmic reticulum membrane. The protein resides in the cell projection. It is found in the dendrite. The catalysed reaction is a very-long-chain acyl-CoA + malonyl-CoA + H(+) = a very-long-chain 3-oxoacyl-CoA + CO2 + CoA. It catalyses the reaction (6Z,9Z,12Z)-octadecatrienoyl-CoA + malonyl-CoA + H(+) = (8Z,11Z,14Z)-3-oxoeicosatrienoyl-CoA + CO2 + CoA. The enzyme catalyses (9Z,12Z,15Z)-octadecatrienoyl-CoA + malonyl-CoA + H(+) = (11Z,14Z,17Z)-3-oxoeicosatrienoyl-CoA + CO2 + CoA. It carries out the reaction (9Z)-hexadecenoyl-CoA + malonyl-CoA + H(+) = 3-oxo-(11Z)-octadecenoyl-CoA + CO2 + CoA. The catalysed reaction is (9Z)-octadecenoyl-CoA + malonyl-CoA + H(+) = 3-oxo-(11Z)-eicosenoyl-CoA + CO2 + CoA. It catalyses the reaction (11Z)-octadecenoyl-CoA + malonyl-CoA + H(+) = 3-oxo-(13Z)-eicosenoyl-CoA + CO2 + CoA. The enzyme catalyses (9Z,12Z)-octadecadienoyl-CoA + malonyl-CoA + H(+) = (11Z,14Z)-3-oxoicosa-11,14-dienoyl-CoA + CO2 + CoA. It carries out the reaction (6Z,9Z,12Z,15Z)-octadecatetraenoyl-CoA + malonyl-CoA + H(+) = (8Z,11Z,14Z,17Z)-3-oxoicosatetraenoyl-CoA + CO2 + CoA. The catalysed reaction is (5Z,8Z,11Z,14Z)-eicosatetraenoyl-CoA + malonyl-CoA + H(+) = (7Z,10Z,13Z,16Z)-3-oxodocosatetraenoyl-CoA + CO2 + CoA. It catalyses the reaction (5Z,8Z,11Z,14Z,17Z)-eicosapentaenoyl-CoA + malonyl-CoA + H(+) = 3-oxo-(7Z,10Z,13Z,16Z,19Z)-docosapentaenoyl-CoA + CO2 + CoA. Its pathway is lipid metabolism; polyunsaturated fatty acid biosynthesis. In terms of biological role, catalyzes the first and rate-limiting reaction of the four reactions that constitute the long-chain fatty acids elongation cycle. This endoplasmic reticulum-bound enzymatic process allows the addition of 2 carbons to the chain of long- and very long-chain fatty acids (VLCFAs) per cycle. Condensing enzyme that acts specifically toward polyunsaturated acyl-CoA with the higher activity toward C18:3(n-6) acyl-CoA. May participate in the production of monounsaturated and of polyunsaturated VLCFAs of different chain lengths that are involved in multiple biological processes as precursors of membrane lipids and lipid mediators. In conditions where the essential linoleic and alpha linoleic fatty acids are lacking it is also involved in the synthesis of Mead acid from oleic acid. In Mus musculus (Mouse), this protein is Very long chain fatty acid elongase 5.